Reading from the N-terminus, the 129-residue chain is Large ribosomal subunit protein bL20 (129 aa).

The protein belongs to the bacterial ribosomal protein bL20 family.

In terms of biological role, binds directly to 23S ribosomal RNA and is necessary for the in vitro assembly process of the 50S ribosomal subunit. It is not involved in the protein synthesizing functions of that subunit. In Rhodococcus jostii (strain RHA1), this protein is Large ribosomal subunit protein bL20.